Here is a 138-residue protein sequence, read N- to C-terminus: Small ribosomal subunit protein uS8 (138 aa).

This sequence belongs to the universal ribosomal protein uS8 family. As to quaternary structure, part of the 30S ribosomal subunit. Contacts proteins S5 and S12.

In terms of biological role, one of the primary rRNA binding proteins, it binds directly to 16S rRNA central domain where it helps coordinate assembly of the platform of the 30S subunit. This is Small ribosomal subunit protein uS8 (rpsH) from Thermus thermophilus (strain ATCC BAA-163 / DSM 7039 / HB27).